A 111-amino-acid polypeptide reads, in one-letter code: Class I hydrophobin SC4 (111 aa).

Residues 1-25 form the signal peptide; sequence MRFSLALLALPALAAAAPVPGGGKG. Intrachain disulfides connect Cys30–Cys37, Cys38–Cys72, Cys86–Cys92, and Cys93–Cys106. The N-linked (GlcNAc...) asparagine glycan is linked to Asn39.

The protein belongs to the fungal hydrophobin family. Self-assembles to form functional amyloid fibrils called rodlets. Self-assembly into fibrillar rodlets occurs spontaneously at hydrophobic:hydrophilic interfaces and the rodlets further associate laterally to form amphipathic monolayers.

The protein localises to the secreted. It is found in the cell wall. Functionally, aerial growth, conidiation, and dispersal of filamentous fungi in the environment rely upon a capability of their secreting small amphipathic proteins called hydrophobins (HPBs) with low sequence identity. Class I can self-assemble into an outermost layer of rodlet bundles on aerial cell surfaces, conferring cellular hydrophobicity that supports fungal growth, development and dispersal; whereas Class II form highly ordered films at water-air interfaces through intermolecular interactions but contribute nothing to the rodlet structure. SC4 is a dikaryon-specific class I hydrophobin that contributes to the formation of aerial hyphae and fruiting bodies. Plays a role within fruiting bodies by preventing gas channels filling with water under wet conditions, probably serving uninterrupted gas exchange. SC4 cannot fully substitute for SC3. Involved in the unusual characteristic of mounds to adhere to and completely envelop adjacent fruiting bodies on mosaic colonies. The chain is Class I hydrophobin SC4 from Schizophyllum commune (Split gill fungus).